Consider the following 698-residue polypeptide: Potassium-transporting ATPase ATP-binding subunit (698 aa).

Transmembrane regions (helical) follow at residues isoleucine 56–leucine 76, leucine 82–alanine 102, threonine 240–threonine 260, and isoleucine 271–isoleucine 291. The active-site 4-aspartylphosphate intermediate is aspartate 324. Residues aspartate 361, glutamate 365, phenylalanine 393 to serine 400, and lysine 412 contribute to the ATP site. Mg(2+) contacts are provided by aspartate 535 and aspartate 539. The next 3 membrane-spanning stretches (helical) occupy residues phenylalanine 605–methionine 625, alanine 633–methionine 653, and glycine 677–isoleucine 697.

Belongs to the cation transport ATPase (P-type) (TC 3.A.3) family. Type IA subfamily. In terms of assembly, the system is composed of three essential subunits: KdpA, KdpB and KdpC.

Its subcellular location is the cell membrane. It catalyses the reaction K(+)(out) + ATP + H2O = K(+)(in) + ADP + phosphate + H(+). Functionally, part of the high-affinity ATP-driven potassium transport (or Kdp) system, which catalyzes the hydrolysis of ATP coupled with the electrogenic transport of potassium into the cytoplasm. This subunit is responsible for energy coupling to the transport system and for the release of the potassium ions to the cytoplasm. In Bacillus cytotoxicus (strain DSM 22905 / CIP 110041 / 391-98 / NVH 391-98), this protein is Potassium-transporting ATPase ATP-binding subunit.